Consider the following 320-residue polypeptide: Short-chain dehydrogenase/reductase ARMGADRAFT_1169971 (320 aa).

A helical transmembrane segment spans residues 19-39; that stretch reads KVAVVTGANSGIGLYILFHVA. Residues isoleucine 30, aspartate 78, asparagine 105, and lysine 136 each coordinate NADP(+). Asparagine 157 carries an N-linked (GlcNAc...) asparagine glycan. Serine 159 (proton donor) is an active-site residue. NADP(+)-binding residues include tyrosine 192, lysine 196, valine 227, and serine 229. Residue tyrosine 192 is the Proton acceptor of the active site. Lysine 196 (lowers pKa of active site Tyr) is an active-site residue. Residues 235–255 form a helical membrane-spanning segment; the sequence is LFTSLMFGTIINWVFSLFFIS.

Belongs to the short-chain dehydrogenases/reductases (SDR) family.

The protein resides in the membrane. Its pathway is secondary metabolite biosynthesis. In terms of biological role, short-chain dehydrogenase/reductase, part of the gene cluster that mediates the biosynthesis of melleolides, a range of antifungal and phytotoxic polyketide derivatives composed of an orsellinic acid (OA) moiety esterified to various sesquiterpene alcohols. The first step in melleolides biosynthesis is performed by the delta(6)-protoilludene synthase PRO1 which catalyzes the cyclization of farnesyl diphosphate to protoilludene. The orsellinic acid synthase armB produces OA by condensing acetyl-CoA with 3 malonyl-CoA units in a three-round chain elongation reaction folowed by a C2-C7 ring closure. ArmB further catalyzes the trans-esterification of OA to the various sesquiterpene alcohols resulting from the hydroxylation of protoilludene. The melleolides cluster also includes 5 cytochrome P450 monooxygenases, 4 NAD(+)-dependent oxidoreductases, one flavin-dependent oxidoreductase, and one O-methyltransferase. The cytochrome P450 monooxygenases may be involved in protoilludene hydroxylation to elaborate melleolides with multiple alcohol groups, such as melleolide D, which carries alcohol functionalities at C-4, C-5, C-10, and C-13. The role of the NAD(+)-dependent enzymes remains unknown. Numerous melleolides, including arnamial, show 5'-O-methylation of the aromatic moiety which may be catalyzed by the methyltransferase encoded in the cluster. The flavin-dependent oxidoreductase might represent the dehydrogenase yielding the aldehyde in position 1 of arnamial and other melleolides. Finally, several halogenase localized outside of the cluster, are able to catalyze the transfer of a single chlorine atom to the melleolide backbone, resulting in a 6'-chloromelleolide product. This Armillaria gallica (Bulbous honey fungus) protein is Short-chain dehydrogenase/reductase ARMGADRAFT_1169971.